The sequence spans 341 residues: Methionine import ATP-binding protein MetN 2 (341 aa).

One can recognise an ABC transporter domain in the interval 2 to 241; that stretch reads INLQNVSKIY…PKEEMTKRFV (240 aa). Position 38–45 (38–45) interacts with ATP; the sequence is GYSGAGKS.

Belongs to the ABC transporter superfamily. Methionine importer (TC 3.A.1.24) family. In terms of assembly, the complex is composed of two ATP-binding proteins (MetN), two transmembrane proteins (MetI) and a solute-binding protein (MetQ).

It is found in the cell membrane. The enzyme catalyses L-methionine(out) + ATP + H2O = L-methionine(in) + ADP + phosphate + H(+). It catalyses the reaction D-methionine(out) + ATP + H2O = D-methionine(in) + ADP + phosphate + H(+). Functionally, part of the ABC transporter complex MetNIQ involved in methionine import. Responsible for energy coupling to the transport system. The sequence is that of Methionine import ATP-binding protein MetN 2 from Bacillus licheniformis (strain ATCC 14580 / DSM 13 / JCM 2505 / CCUG 7422 / NBRC 12200 / NCIMB 9375 / NCTC 10341 / NRRL NRS-1264 / Gibson 46).